The chain runs to 111 residues: Protein EARLY FLOWERING 4 (111 aa).

Residues 1-26 (MKRNGETKRRRNVAEEAEQGEDPAMW) form a disordered region. Position 45 is a phosphoserine (S45). Positions 90–111 (FSSGFHGGKNGHDGGGAAGTRA) are disordered. Over residues 94-111 (FHGGKNGHDGGGAAGTRA) the composition is skewed to gly residues.

It belongs to the EARLY FLOWERING 4 family. As to quaternary structure, homodimer. Interacts with ELF3.

It localises to the nucleus. Component of the central CCA1/LHY-TOC1 feedback loop in the circadian clock that promotes clock accuracy and is required for sustained rhythms in the absence of daily light/dark cycles. Part of a corepressor complex consisting of ELF4, ELF3, and LUX involved in the transcriptional regulation of APRR9. Increases ELF3 nuclear distribution and localization in nuclear bodies. Required for responsiveness to continuous red, by regulating phytochrome B (phyB) signaling (including during seedling de-etiolation) and gene expression. Mediates both entrainment to an environmental cycle and circadian rhythm sustainability under constant conditions. Controls flowering time. Necessary for light-induced expression of both CCA1 and LHY. This is Protein EARLY FLOWERING 4 (ELF4) from Arabidopsis thaliana (Mouse-ear cress).